Reading from the N-terminus, the 177-residue chain is Adenine phosphoribosyltransferase (177 aa).

The protein belongs to the purine/pyrimidine phosphoribosyltransferase family. As to quaternary structure, homodimer.

Its subcellular location is the cytoplasm. It carries out the reaction AMP + diphosphate = 5-phospho-alpha-D-ribose 1-diphosphate + adenine. It functions in the pathway purine metabolism; AMP biosynthesis via salvage pathway; AMP from adenine: step 1/1. Its function is as follows. Catalyzes a salvage reaction resulting in the formation of AMP, that is energically less costly than de novo synthesis. The chain is Adenine phosphoribosyltransferase from Synechococcus sp. (strain RCC307).